Consider the following 468-residue polypeptide: Phosphomethylpyrimidine synthase (468 aa).

Substrate contacts are provided by residues N82, M111, Y141, H177, 197–199, 238–241, and E277; these read SRG and DSLR. A Zn(2+)-binding site is contributed by H281. Y304 provides a ligand contact to substrate. A Zn(2+)-binding site is contributed by H345. 3 residues coordinate [4Fe-4S] cluster: C425, C428, and C433.

The protein belongs to the ThiC family. Requires [4Fe-4S] cluster as cofactor.

It carries out the reaction 5-amino-1-(5-phospho-beta-D-ribosyl)imidazole + S-adenosyl-L-methionine = 4-amino-2-methyl-5-(phosphooxymethyl)pyrimidine + CO + 5'-deoxyadenosine + formate + L-methionine + 3 H(+). It functions in the pathway cofactor biosynthesis; thiamine diphosphate biosynthesis. Functionally, catalyzes the synthesis of the hydroxymethylpyrimidine phosphate (HMP-P) moiety of thiamine from aminoimidazole ribotide (AIR) in a radical S-adenosyl-L-methionine (SAM)-dependent reaction. This Prochlorococcus marinus (strain SARG / CCMP1375 / SS120) protein is Phosphomethylpyrimidine synthase.